A 159-amino-acid chain; its full sequence is Ribosomal RNA large subunit methyltransferase H (159 aa).

S-adenosyl-L-methionine contacts are provided by residues glycine 108 and 127-132 (FGKLTM).

Belongs to the RNA methyltransferase RlmH family. Homodimer.

The protein localises to the cytoplasm. It catalyses the reaction pseudouridine(1915) in 23S rRNA + S-adenosyl-L-methionine = N(3)-methylpseudouridine(1915) in 23S rRNA + S-adenosyl-L-homocysteine + H(+). In terms of biological role, specifically methylates the pseudouridine at position 1915 (m3Psi1915) in 23S rRNA. The protein is Ribosomal RNA large subunit methyltransferase H of Lactobacillus helveticus (strain DPC 4571).